The sequence spans 156 residues: ATP synthase subunit b (156 aa).

A helical transmembrane segment spans residues 7-27 (LFVQAIVFLILVLFTMKFVWP).

Belongs to the ATPase B chain family. As to quaternary structure, F-type ATPases have 2 components, F(1) - the catalytic core - and F(0) - the membrane proton channel. F(1) has five subunits: alpha(3), beta(3), gamma(1), delta(1), epsilon(1). F(0) has three main subunits: a(1), b(2) and c(10-14). The alpha and beta chains form an alternating ring which encloses part of the gamma chain. F(1) is attached to F(0) by a central stalk formed by the gamma and epsilon chains, while a peripheral stalk is formed by the delta and b chains.

It is found in the cell inner membrane. Its function is as follows. F(1)F(0) ATP synthase produces ATP from ADP in the presence of a proton or sodium gradient. F-type ATPases consist of two structural domains, F(1) containing the extramembraneous catalytic core and F(0) containing the membrane proton channel, linked together by a central stalk and a peripheral stalk. During catalysis, ATP synthesis in the catalytic domain of F(1) is coupled via a rotary mechanism of the central stalk subunits to proton translocation. In terms of biological role, component of the F(0) channel, it forms part of the peripheral stalk, linking F(1) to F(0). The polypeptide is ATP synthase subunit b (Paracidovorax citrulli (strain AAC00-1) (Acidovorax citrulli)).